We begin with the raw amino-acid sequence, 243 residues long: 7-carboxy-7-deazaguanine synthase (243 aa).

Substrate is bound by residues 9-11 and R24; that span reads IMG. A Radical SAM core domain is found at 15–243; that stretch reads YIGRRFIFVR…IQMHKYLGML (229 aa). 3 residues coordinate [4Fe-4S] cluster: C28, C32, and C35. T84 is a binding site for substrate. G86 contacts S-adenosyl-L-methionine.

The protein belongs to the radical SAM superfamily. 7-carboxy-7-deazaguanine synthase family. Homodimer. The cofactor is [4Fe-4S] cluster. S-adenosyl-L-methionine serves as cofactor. It depends on Mg(2+) as a cofactor.

The catalysed reaction is 6-carboxy-5,6,7,8-tetrahydropterin + H(+) = 7-carboxy-7-deazaguanine + NH4(+). It functions in the pathway purine metabolism; 7-cyano-7-deazaguanine biosynthesis. Catalyzes the complex heterocyclic radical-mediated conversion of 6-carboxy-5,6,7,8-tetrahydropterin (CPH4) to 7-carboxy-7-deazaguanine (CDG), a step common to the biosynthetic pathways of all 7-deazapurine-containing compounds. This Methanocaldococcus jannaschii (strain ATCC 43067 / DSM 2661 / JAL-1 / JCM 10045 / NBRC 100440) (Methanococcus jannaschii) protein is 7-carboxy-7-deazaguanine synthase.